The sequence spans 442 residues: Meiotically up-regulated gene 191 protein (442 aa).

Threonine 361 carries the post-translational modification Phosphothreonine. Residues 416 to 429 show a composition bias toward polar residues; sequence RNNPSSGESTTLPQ. The tract at residues 416-442 is disordered; sequence RNNPSSGESTTLPQPSHGKKDKDCVIS. Positions 433–442 are enriched in basic and acidic residues; that stretch reads GKKDKDCVIS.

Its subcellular location is the cytoplasm. The protein resides in the nucleus. Has a role in meiosis. This is Meiotically up-regulated gene 191 protein (mug191) from Schizosaccharomyces pombe (strain 972 / ATCC 24843) (Fission yeast).